The following is a 273-amino-acid chain: Large ribosomal subunit protein uL2 (273 aa).

The interval 228–273 (VDHPHGGGEGKTSGGRHPVTPWGFPTKGKKTRKNKRTSKFIVKKRK) is disordered. Basic residues predominate over residues 254–273 (KGKKTRKNKRTSKFIVKKRK).

Belongs to the universal ribosomal protein uL2 family. As to quaternary structure, part of the 50S ribosomal subunit. Forms a bridge to the 30S subunit in the 70S ribosome.

One of the primary rRNA binding proteins. Required for association of the 30S and 50S subunits to form the 70S ribosome, for tRNA binding and peptide bond formation. It has been suggested to have peptidyltransferase activity; this is somewhat controversial. Makes several contacts with the 16S rRNA in the 70S ribosome. The sequence is that of Large ribosomal subunit protein uL2 from Rickettsia felis (strain ATCC VR-1525 / URRWXCal2) (Rickettsia azadi).